Here is a 571-residue protein sequence, read N- to C-terminus: Optineurin (571 aa).

Disordered stretches follow at residues 1-32 (MSHQ…HPNL) and 100-144 (LSHE…DQLR). The stretch at 38–170 (EELLQQMKEL…VSELQLKLNS (133 aa)) forms a coiled coil. Residues 58-209 (MKLNNQAMKG…GPTRTVSIGT (152 aa)) are interaction with Rab8. Basic and acidic residues-rich tracts occupy residues 100-123 (LSHE…RSSE) and 130-143 (RLPR…KDQL). The short motif at 176–181 (DSFVEI) is the LIR element. Phosphoserine; by TBK1 is present on S177. Residues 186–197 (GEAEGSVKEIKH) show a composition bias toward basic and acidic residues. Disordered regions lie at residues 186-210 (GEAE…IGTS) and 255-291 (VSDF…TVGS). S198 carries the phosphoserine modification. A compositionally biased stretch (polar residues) spans 201–210 (PTRTVSIGTS). Residues 233–502 (CLREGNQKVE…LLKENDAFED (270 aa)) adopt a coiled-coil conformation. Composition is skewed to basic and acidic residues over residues 255–268 (VSDF…RSEI) and 275–286 (STEKENEEEKGP). S336 bears the Phosphoserine mark. The interval 405 to 571 (TRKESEKVDR…LQIHVMDCII (167 aa)) is interaction with HD. The segment at 406–514 (RKESEKVDRA…RQSLMEMQSR (109 aa)) is interaction with MYO6. The short motif at 468 to 473 (DFHAER) is the UBAN element. Position 520 is a phosphoserine (S520). The CCHC NOA-type zinc-finger motif lies at 541–571 (QRNIPIHSCPKCGEVLPDIDTLQIHVMDCII). Zn(2+) contacts are provided by C549, C552, H565, and C569.

In terms of assembly, self-associates. Interacts with HD. Interacts with GTF3A. Interacts with MYO6. Interacts (via UBAN) with ubiquitinated TFRC. Interacts with GTP-bound Rab8 (RAB8A and/or RAB8B). Interacts with TBC1D17. Interacts with TBK1. Interacts with TRAF3. Binds to linear ubiquitin chains. Interacts with LC3 family members MAP1LC3A, MAP1LC3B, GABARAP, GABARAPL1 and GABARAPL2; OPTN phosphorylation increases the association (at least with MAP1LC3B). Interacts with RAB12; the interaction may be indirect. Interacts with TBK1; this interaction leads to the Golgi localization of TBK1 and its subsequent activation. Interacts with palmitoyltransferase ZDHHC17/HIP14; the interaction does not lead to palmitoylation of OPTN. Interacts with CYLD. Interacts with TOM1; the interaction is indirect and is mediated by MYO6, which acts as a bridge between TOM1 and OPTN. Interacts with USP12; the interaction is independent of USP12 deubiquitinase activity and may be involved in regulation of autophagic flux. Phosphorylated by TBK1, leading to restrict bacterial proliferation in case of infection.

Its subcellular location is the cytoplasm. The protein localises to the perinuclear region. It localises to the golgi apparatus. It is found in the trans-Golgi network. The protein resides in the cytoplasmic vesicle. Its subcellular location is the autophagosome. The protein localises to the recycling endosome. Functionally, plays an important role in the maintenance of the Golgi complex, in membrane trafficking, in exocytosis, through its interaction with myosin VI and Rab8. Links myosin VI to the Golgi complex and plays an important role in Golgi ribbon formation. Negatively regulates the induction of IFNB in response to RNA virus infection. Plays a neuroprotective role in the eye and optic nerve. Probably part of the TNF-alpha signaling pathway that can shift the equilibrium toward induction of cell death. May act by regulating membrane trafficking and cellular morphogenesis via a complex that contains Rab8 and huntingtin (HD). Mediates the interaction of Rab8 with the probable GTPase-activating protein TBC1D17 during Rab8-mediated endocytic trafficking, such as that of transferrin receptor (TFRC/TfR); regulates Rab8 recruitment to tubules emanating from the endocytic recycling compartment. Autophagy receptor that interacts directly with both the cargo to become degraded and an autophagy modifier of the MAP1 LC3 family; targets ubiquitin-coated bacteria (xenophagy) and appears to function in the same pathway as SQSTM1 and CALCOCO2/NDP52. The polypeptide is Optineurin (OPTN) (Macaca fascicularis (Crab-eating macaque)).